The sequence spans 152 residues: MTHSVQLKILDKRLGSEFPLPAYATTGSAGLDLRACLDEPLKIEPDETCLISTGLAIYLGHSNVAATILPRSGLGHKHGIVLGNLVGLIDSDYQGPLMVSCWNRGKEPYTINPGDRIAQLVVLPILKAQFAVVEEFELTERGAGGFGSSGQN.

Residues arginine 71–glycine 73, asparagine 84, leucine 88–aspartate 90, and methionine 98 contribute to the substrate site.

The protein belongs to the dUTPase family. It depends on Mg(2+) as a cofactor.

The enzyme catalyses dUTP + H2O = dUMP + diphosphate + H(+). It functions in the pathway pyrimidine metabolism; dUMP biosynthesis; dUMP from dCTP (dUTP route): step 2/2. Its function is as follows. This enzyme is involved in nucleotide metabolism: it produces dUMP, the immediate precursor of thymidine nucleotides and it decreases the intracellular concentration of dUTP so that uracil cannot be incorporated into DNA. This is Deoxyuridine 5'-triphosphate nucleotidohydrolase from Coxiella burnetii (strain RSA 331 / Henzerling II).